Reading from the N-terminus, the 842-residue chain is Elongation factor 2 (842 aa).

Positions 17–346 constitute a tr-type G domain; that stretch reads TNVRNMSVIA…MIVLHLPSPV (330 aa). Residues 26–33, 158–161, and 213–215 each bind GTP; these read AHVDHGKS, NKVD, and SGL. Diphthamide is present on histidine 699.

This sequence belongs to the TRAFAC class translation factor GTPase superfamily. Classic translation factor GTPase family. EF-G/EF-2 subfamily.

The protein resides in the cytoplasm. The enzyme catalyses GTP + H2O = GDP + phosphate + H(+). In terms of biological role, catalyzes the GTP-dependent ribosomal translocation step during translation elongation. During this step, the ribosome changes from the pre-translocational (PRE) to the post-translocational (POST) state as the newly formed A-site-bound peptidyl-tRNA and P-site-bound deacylated tRNA move to the P and E sites, respectively. Catalyzes the coordinated movement of the two tRNA molecules, the mRNA and conformational changes in the ribosome. The protein is Elongation factor 2 (EFT2) of Candida albicans (strain SC5314 / ATCC MYA-2876) (Yeast).